Consider the following 269-residue polypeptide: GTP cyclohydrolase FolE2 (269 aa).

This sequence belongs to the GTP cyclohydrolase IV family.

It carries out the reaction GTP + H2O = 7,8-dihydroneopterin 3'-triphosphate + formate + H(+). It participates in cofactor biosynthesis; 7,8-dihydroneopterin triphosphate biosynthesis; 7,8-dihydroneopterin triphosphate from GTP: step 1/1. Its function is as follows. Converts GTP to 7,8-dihydroneopterin triphosphate. The polypeptide is GTP cyclohydrolase FolE2 (Burkholderia ambifaria (strain MC40-6)).